Here is a 320-residue protein sequence, read N- to C-terminus: o-succinylbenzoate synthase (320 aa).

The active-site Proton donor is lysine 133. Residues aspartate 161, glutamate 190, and aspartate 213 each coordinate Mg(2+). Lysine 235 functions as the Proton acceptor in the catalytic mechanism.

It belongs to the mandelate racemase/muconate lactonizing enzyme family. MenC type 1 subfamily. Requires a divalent metal cation as cofactor.

It catalyses the reaction (1R,6R)-6-hydroxy-2-succinyl-cyclohexa-2,4-diene-1-carboxylate = 2-succinylbenzoate + H2O. Its pathway is quinol/quinone metabolism; 1,4-dihydroxy-2-naphthoate biosynthesis; 1,4-dihydroxy-2-naphthoate from chorismate: step 4/7. It functions in the pathway quinol/quinone metabolism; menaquinone biosynthesis. Functionally, converts 2-succinyl-6-hydroxy-2,4-cyclohexadiene-1-carboxylate (SHCHC) to 2-succinylbenzoate (OSB). The sequence is that of o-succinylbenzoate synthase from Escherichia coli O9:H4 (strain HS).